The sequence spans 76 residues: Alpha/kappa-conotoxin pl14a (76 aa).

Positions 1–24 (MPSVRSVTCCCLLWMMFSVQLVTP) are cleaved as a signal peptide. The propeptide occupies 25-39 (GSPGTAQLSGHRTAR). Disulfide bonds link C46–C61 and C50–C63. At R64 the chain carries Arginine amide. Positions 65 to 76 (GKRDAVSSSMAV) are excised as a propeptide.

This sequence belongs to the conotoxin J superfamily. Expressed by the venom duct.

The protein resides in the secreted. Highly inhibits both nicotinic acetylcholine receptors (neuronal (IC(50)=8.7 uM for alpha-3/beta-4) and muscular (IC(50)=0.54 uM for alpha-1-beta-1-epsilon-delta (CHRNA1-CHRNB1-CHRND-CHRNE)) subtypes) and the voltage-gated potassium channel Kv1.6/KCNA6 subtype (IC(50)=1.59 uM). The sequence is that of Alpha/kappa-conotoxin pl14a from Conus planorbis (Planorbis cone).